We begin with the raw amino-acid sequence, 327 residues long: Phenylalanine--tRNA ligase alpha subunit (327 aa).

A Mg(2+)-binding site is contributed by E252.

It belongs to the class-II aminoacyl-tRNA synthetase family. Phe-tRNA synthetase alpha subunit type 1 subfamily. In terms of assembly, tetramer of two alpha and two beta subunits. It depends on Mg(2+) as a cofactor.

It localises to the cytoplasm. It catalyses the reaction tRNA(Phe) + L-phenylalanine + ATP = L-phenylalanyl-tRNA(Phe) + AMP + diphosphate + H(+). The protein is Phenylalanine--tRNA ligase alpha subunit of Vibrio vulnificus (strain CMCP6).